Consider the following 72-residue polypeptide: uncharacterized protein (72 aa).

A signal peptide spans 1-19; that stretch reads MKKWAVIISAVGLAFAVSG. Residue cysteine 20 is the site of N-palmitoyl cysteine attachment. Cysteine 20 is lipidated: S-diacylglycerol cysteine.

The protein to E.coli YgdI.

It is found in the cell membrane. This is an uncharacterized protein from Escherichia coli O6:H1 (strain CFT073 / ATCC 700928 / UPEC).